Reading from the N-terminus, the 319-residue chain is Cutinase cut1 (319 aa).

The signal sequence occupies residues 1–58 (MPPHAARPGPAQNRRGRAMAVITPRRERSSLLSRALRFTAAAATALVTAVSLAAPAHA). Residue Tyr118 coordinates poly(ethylene terephthalate). Catalysis depends on Ser188, which acts as the Nucleophile. Poly(ethylene terephthalate) is bound by residues Met189 and Trp213. Catalysis depends on charge relay system residues Asp234 and His266. Cys299 and Cys317 are oxidised to a cystine.

It belongs to the AB hydrolase superfamily.

The protein resides in the secreted. The protein localises to the periplasm. It catalyses the reaction an acetyl ester + H2O = an aliphatic alcohol + acetate + H(+). It carries out the reaction a butanoate ester + H2O = an aliphatic alcohol + butanoate + H(+). The catalysed reaction is pentanoate ester + H2O = pentanoate + an aliphatic alcohol + H(+). The enzyme catalyses an octanoate ester + H2O = an aliphatic alcohol + octanoate + H(+). It catalyses the reaction decanoate ester + H2O = decanoate + an aliphatic alcohol + H(+). It carries out the reaction a dodecanoate ester + H2O = an aliphatic alcohol + dodecanoate + H(+). The catalysed reaction is a tetradecanoate ester + H2O = an aliphatic alcohol + tetradecanoate + H(+). The enzyme catalyses hexadecanoate ester + H2O = an aliphatic alcohol + hexadecanoate + H(+). It catalyses the reaction cutin + H2O = cutin monomers.. It carries out the reaction (ethylene terephthalate)(n) + H2O = (ethylene terephthalate)(n-1) + 4-[(2-hydroxyethoxy)carbonyl]benzoate + H(+). With respect to regulation, activated by magnesium ions. Activated by calcium ions. Functionally, catalyzes the hydrolysis of cutin, a polyester that forms the structure of plant cuticle. Shows esterase activity towards p-nitrophenol-linked aliphatic esters (pNP-aliphatic esters). Capable of degrading the plastic poly(ethylene terephthalate) (PET), the most abundant polyester plastic in the world. The polypeptide is Cutinase cut1 (Thermobifida fusca (Thermomonospora fusca)).